The following is a 227-amino-acid chain: Ribonuclease 3 (227 aa).

Residues 4–133 (FEELEKLLDY…LIAAIYLDSD (130 aa)) enclose the RNase III domain. Position 46 (Glu46) interacts with Mg(2+). The active site involves Asp50. The Mg(2+) site is built by Asn119 and Glu122. Glu122 is an active-site residue. One can recognise a DRBM domain in the interval 158 to 226 (DPKTALQEWA…ARELLHKLKL (69 aa)).

This sequence belongs to the ribonuclease III family. Homodimer. The cofactor is Mg(2+).

The protein resides in the cytoplasm. The catalysed reaction is Endonucleolytic cleavage to 5'-phosphomonoester.. Functionally, digests double-stranded RNA. Involved in the processing of primary rRNA transcript to yield the immediate precursors to the large and small rRNAs (23S and 16S). Processes some mRNAs, and tRNAs when they are encoded in the rRNA operon. Processes pre-crRNA and tracrRNA of type II CRISPR loci if present in the organism. This is Ribonuclease 3 from Rickettsia bellii (strain OSU 85-389).